The chain runs to 935 residues: LPS-assembly protein LptD (935 aa).

Residues 1–33 form the signal peptide; that stretch reads MALKSPAFRRKFPLLVTGGLLALQPLATSYVVA. Positions 52–85 are disordered; sequence KTPVNNLPPRPVHEGAAVSSGTEAAGEAETADRP. Over residues 65–79 the composition is skewed to low complexity; sequence EGAAVSSGTEAAGEA.

Belongs to the LptD family. In terms of assembly, component of the lipopolysaccharide transport and assembly complex. Interacts with LptE and LptA.

The protein localises to the cell outer membrane. Together with LptE, is involved in the assembly of lipopolysaccharide (LPS) at the surface of the outer membrane. The polypeptide is LPS-assembly protein LptD (Pseudomonas putida (strain ATCC 700007 / DSM 6899 / JCM 31910 / BCRC 17059 / LMG 24140 / F1)).